Consider the following 340-residue polypeptide: Uroporphyrinogen decarboxylase (340 aa).

Residues 21–25 (RQAGR), phenylalanine 40, aspartate 71, tyrosine 147, serine 202, and histidine 316 contribute to the substrate site.

It belongs to the uroporphyrinogen decarboxylase family. As to quaternary structure, homodimer.

The protein resides in the cytoplasm. It catalyses the reaction uroporphyrinogen III + 4 H(+) = coproporphyrinogen III + 4 CO2. It participates in porphyrin-containing compound metabolism; protoporphyrin-IX biosynthesis; coproporphyrinogen-III from 5-aminolevulinate: step 4/4. Catalyzes the decarboxylation of four acetate groups of uroporphyrinogen-III to yield coproporphyrinogen-III. The chain is Uroporphyrinogen decarboxylase from Wolinella succinogenes (strain ATCC 29543 / DSM 1740 / CCUG 13145 / JCM 31913 / LMG 7466 / NCTC 11488 / FDC 602W) (Vibrio succinogenes).